Here is a 444-residue protein sequence, read N- to C-terminus: Endothelin-3 receptor (444 aa).

Positions 1–18 (MATVILFVAWMACLMVGV) are cleaved as a signal peptide. Residues 19 to 88 (CYQEFQTQQN…SRAKIRHAFK (70 aa)) lie on the Extracellular side of the membrane. Asn60 carries N-linked (GlcNAc...) asparagine glycosylation. A helical transmembrane segment spans residues 89–113 (YVTTILSCVIFLVGIVGNSTLLRII). At 114 to 124 (YKNKCMRNGPN) the chain is on the cytoplasmic side. A helical transmembrane segment spans residues 125–145 (VLIASLALGDLFYILIAIPII). Residues 146-161 (SISFWLSTGHSEYIYQ) lie on the Extracellular side of the membrane. A helical membrane pass occupies residues 162-180 (LVHLYRARVYSLSLCALSI). Residues 181–201 (DRYRAVASWNRIRSIGIPVRK) lie on the Cytoplasmic side of the membrane. The helical transmembrane segment at 202 to 226 (AIELTLIWAVAIIVAVPEAIAFNLV) threads the bilayer. Over 227 to 254 (ELDFRGQTILVCMLPMEQTSDFMRFYQE) the chain is Extracellular. Residues 255–279 (VKVWWLFGFYFCLPLACTGVFYTLM) form a helical membrane-spanning segment. Residues 280 to 307 (SCEMLSIKNGMRIALNDHMKQRREVAKT) lie on the Cytoplasmic side of the membrane. Residues 308-328 (VFCLVVIFALCWLPLHVSSIF) traverse the membrane as a helical segment. Topologically, residues 329–365 (VRLSATVKRACILKNKRSCIMAEIQTGVNYQLLMVMN) are extracellular. Residues 366-386 (YTGINMASLNSCIGPVALYFV) form a helical membrane-spanning segment. Topologically, residues 387 to 444 (SRKFKNCFQSCLCCWCHRPTLTITPMDEKGSGGKWKANGHDLDLDRSSSRLSNKYSSS) are cytoplasmic. Residues 416-444 (GSGGKWKANGHDLDLDRSSSRLSNKYSSS) are disordered. Basic and acidic residues predominate over residues 424–434 (NGHDLDLDRSS). Residues 435–444 (SRLSNKYSSS) are compositionally biased toward low complexity.

Belongs to the G-protein coupled receptor 1 family. Endothelin receptor subfamily.

Its subcellular location is the cell membrane. Receptor for endothelin-3. Mediates its action by association with G proteins that activate a phosphatidylinositol-calcium second messenger system. This chain is Endothelin-3 receptor, found in Xenopus laevis (African clawed frog).